Here is a 591-residue protein sequence, read N- to C-terminus: L-fucose isomerase (591 aa).

Active-site proton acceptor residues include Glu-338 and Asp-362. Glu-338, Asp-362, and His-529 together coordinate Mn(2+).

The protein belongs to the L-fucose isomerase family. Mn(2+) is required as a cofactor.

The protein resides in the cytoplasm. The enzyme catalyses L-fucose = L-fuculose. It participates in carbohydrate degradation; L-fucose degradation; L-lactaldehyde and glycerone phosphate from L-fucose: step 1/3. Functionally, converts the aldose L-fucose into the corresponding ketose L-fuculose. In Bacteroides thetaiotaomicron (strain ATCC 29148 / DSM 2079 / JCM 5827 / CCUG 10774 / NCTC 10582 / VPI-5482 / E50), this protein is L-fucose isomerase.